The sequence spans 332 residues: Decaprenyl-phosphate phosphoribosyltransferase (332 aa).

A compositionally biased stretch (basic and acidic residues) spans 1 to 12; it reads MSEHAAEHHRDT. A disordered region spans residues 1–36; sequence MSEHAAEHHRDTQNFLTSEPHTTAIEDNKKRQPPKN. A run of 2 helical transmembrane segments spans residues 50–70 and 74–94; these read WVKN…AIFN and IIDV…IYLV. The 5-phospho-alpha-D-ribose 1-diphosphate site is built by Lys52 and Tyr92. Positions 95 and 99 each coordinate Mg(2+). Lys109 contributes to the 5-phospho-alpha-D-ribose 1-diphosphate binding site. A run of 2 helical transmembrane segments spans residues 114–134 and 146–166; these read IAAG…LIAL and VALA…CFGW. 5-phospho-alpha-D-ribose 1-diphosphate contacts are provided by Lys167 and Arg184. 2 helical membrane passes run 169–189 and 190–210; these read MPVI…MAGG and VAAG…GSLF. Lys215 is a trans,octa-cis-decaprenyl phosphate binding site. The next 3 membrane-spanning stretches (helical) occupy residues 244-264, 273-293, and 310-330; these read FVWT…GFDL, PWYQ…AAGV, and VLQV…YIMP.

It belongs to the UbiA prenyltransferase family. DPPR synthase subfamily. Mg(2+) serves as cofactor.

It is found in the cell inner membrane. It carries out the reaction trans,octa-cis-decaprenyl phosphate + 5-phospho-alpha-D-ribose 1-diphosphate + H(+) = trans,octa-cis-decaprenylphospho-beta-D-ribofuranose 5-phosphate + diphosphate. Its pathway is cell wall biogenesis; cell wall polysaccharide biosynthesis. Involved in the biosynthesis of decaprenylphosphoryl arabinose (DPA) a precursor for arabinan synthesis in mycobacterial cell wall biosynthesis. Catalyzes the transfer of a 5-phosphoribosyl residue from phosphoribose diphosphate (PRPP) to decaprenyl phosphate (DP) to form decaprenylphosphoryl-5-phosphoribose (DPPR). This chain is Decaprenyl-phosphate phosphoribosyltransferase, found in Corynebacterium glutamicum (strain ATCC 13032 / DSM 20300 / JCM 1318 / BCRC 11384 / CCUG 27702 / LMG 3730 / NBRC 12168 / NCIMB 10025 / NRRL B-2784 / 534).